The chain runs to 724 residues: Ribosomal protein S6 kinase alpha-1 (724 aa).

Ser-54 is subject to Phosphoserine. A Protein kinase 1 domain is found at 62-310 (FELLKVLGQG…AEEIKRHIFY (249 aa)). Residues 68 to 76 (LGQGSFGKV) and Lys-94 each bind ATP. Residue Asp-187 is the Proton acceptor of the active site. Ser-221 bears the Phosphoserine; by PDPK1 mark. Ser-296 bears the Phosphoserine mark. Positions 311-380 (STIDWNKLYR…VATGLMEDDG (70 aa)) constitute an AGC-kinase C-terminal domain. A Phosphothreonine modification is found at Thr-348. 3 positions are modified to phosphoserine: Ser-352, Ser-358, and Ser-369. A Protein kinase 2 domain is found at 407-664 (YVVKETIGVG…AKQVLQHPWI (258 aa)). Residues 413–421 (IGVGSYSVC) and Lys-436 each bind ATP. Asp-524 functions as the Proton acceptor in the catalytic mechanism. Thr-562 bears the Phosphothreonine mark. Ser-721 bears the Phosphoserine mark.

This sequence belongs to the protein kinase superfamily. AGC Ser/Thr protein kinase family. S6 kinase subfamily. In terms of assembly, forms a complex with either MAPK1/ERK2 or MAPK3/ERK1 in quiescent cells. Transiently dissociates following mitogenic stimulation. Interacts with ETV1/ER81 and FGFR1. It depends on Mg(2+) as a cofactor. Activated by phosphorylation at Ser-221 by PDPK1. Autophosphorylated on Ser-369, as part of the activation process. May be phosphorylated at Thr-348 and Ser-352 by MAPK1/ERK2 and MAPK3/ERK1. Post-translationally, N-terminal myristoylation results in an activated kinase in the absence of added growth factors. In terms of tissue distribution, intestine, thymus, and lung.

It localises to the nucleus. The protein resides in the cytoplasm. It carries out the reaction L-seryl-[protein] + ATP = O-phospho-L-seryl-[protein] + ADP + H(+). The enzyme catalyses L-threonyl-[protein] + ATP = O-phospho-L-threonyl-[protein] + ADP + H(+). Its activity is regulated as follows. Upon extracellular signal or mitogen stimulation, phosphorylated at Thr-562 in the C-terminal kinase domain (CTKD) by MAPK1/ERK2 and MAPK3/ERK1. The activated CTKD then autophosphorylates Ser-369, allowing binding of PDPK1, which in turn phosphorylates Ser-221 in the N-terminal kinase domain (NTDK) leading to the full activation of the protein and subsequent phosphorylation of the substrates by the NTKD. Its function is as follows. Serine/threonine-protein kinase that acts downstream of ERK (MAPK1/ERK2 and MAPK3/ERK1) signaling and mediates mitogenic and stress-induced activation of the transcription factors CREB1, ETV1/ER81 and NR4A1/NUR77, regulates translation through RPS6 and EIF4B phosphorylation, and mediates cellular proliferation, survival, and differentiation by modulating mTOR signaling and repressing pro-apoptotic function of BAD and DAPK1. In fibroblast, is required for EGF-stimulated phosphorylation of CREB1, which results in the subsequent transcriptional activation of several immediate-early genes. In response to mitogenic stimulation (EGF and PMA), phosphorylates and activates NR4A1/NUR77 and ETV1/ER81 transcription factors and the cofactor CREBBP. Upon insulin-derived signal, acts indirectly on the transcription regulation of several genes by phosphorylating GSK3B at 'Ser-9' and inhibiting its activity. Phosphorylates RPS6 in response to serum or EGF via an mTOR-independent mechanism and promotes translation initiation by facilitating assembly of the pre-initiation complex. In response to insulin, phosphorylates EIF4B, enhancing EIF4B affinity for the EIF3 complex and stimulating cap-dependent translation. Is involved in the mTOR nutrient-sensing pathway by directly phosphorylating TSC2 at 'Ser-1798', which potently inhibits TSC2 ability to suppress mTOR signaling, and mediates phosphorylation of RPTOR, which regulates mTORC1 activity and may promote rapamycin-sensitive signaling independently of the PI3K/AKT pathway. Also involved in feedback regulation of mTORC1 and mTORC2 by phosphorylating DEPTOR. Mediates cell survival by phosphorylating the pro-apoptotic proteins BAD and DAPK1 and suppressing their pro-apoptotic function. Promotes the survival of hepatic stellate cells by phosphorylating CEBPB in response to the hepatotoxin carbon tetrachloride (CCl4). Mediates induction of hepatocyte prolifration by TGFA through phosphorylation of CEBPB. Is involved in cell cycle regulation by phosphorylating the CDK inhibitor CDKN1B, which promotes CDKN1B association with 14-3-3 proteins and prevents its translocation to the nucleus and inhibition of G1 progression. Phosphorylates EPHA2 at 'Ser-897', the RPS6KA-EPHA2 signaling pathway controls cell migration. In response to mTORC1 activation, phosphorylates EIF4B at 'Ser-406' and 'Ser-422' which stimulates bicarbonate cotransporter SLC4A7 mRNA translation, increasing SLC4A7 protein abundance and function. In Mus musculus (Mouse), this protein is Ribosomal protein S6 kinase alpha-1 (Rps6ka1).